A 289-amino-acid polypeptide reads, in one-letter code: Formamidopyrimidine-DNA glycosylase (289 aa).

The Schiff-base intermediate with DNA role is filled by P2. E3 (proton donor) is an active-site residue. K61 functions as the Proton donor; for beta-elimination activity in the catalytic mechanism. Residues H97, R119, and K168 each coordinate DNA. The FPG-type zinc-finger motif lies at 254 to 288 (NAYGRAGKPCPRCGEPIVRVQWTNRSSHFCPQCQS). R278 serves as the catalytic Proton donor; for delta-elimination activity.

Belongs to the FPG family. As to quaternary structure, monomer. Zn(2+) serves as cofactor.

It catalyses the reaction Hydrolysis of DNA containing ring-opened 7-methylguanine residues, releasing 2,6-diamino-4-hydroxy-5-(N-methyl)formamidopyrimidine.. The catalysed reaction is 2'-deoxyribonucleotide-(2'-deoxyribose 5'-phosphate)-2'-deoxyribonucleotide-DNA = a 3'-end 2'-deoxyribonucleotide-(2,3-dehydro-2,3-deoxyribose 5'-phosphate)-DNA + a 5'-end 5'-phospho-2'-deoxyribonucleoside-DNA + H(+). In terms of biological role, involved in base excision repair of DNA damaged by oxidation or by mutagenic agents. Acts as a DNA glycosylase that recognizes and removes damaged bases. Has a preference for oxidized purines, such as 7,8-dihydro-8-oxoguanine (8-oxoG). Has AP (apurinic/apyrimidinic) lyase activity and introduces nicks in the DNA strand. Cleaves the DNA backbone by beta-delta elimination to generate a single-strand break at the site of the removed base with both 3'- and 5'-phosphates. In Corynebacterium urealyticum (strain ATCC 43042 / DSM 7109), this protein is Formamidopyrimidine-DNA glycosylase.